We begin with the raw amino-acid sequence, 400 residues long: Imidazolonepropionase (400 aa).

Fe(3+) contacts are provided by His70 and His72. Zn(2+) contacts are provided by His70 and His72. 4-imidazolone-5-propanoate-binding residues include Arg79, Tyr142, and His175. Tyr142 is an N-formimidoyl-L-glutamate binding site. His239 is a binding site for Fe(3+). His239 provides a ligand contact to Zn(2+). Gln242 lines the 4-imidazolone-5-propanoate pocket. A Fe(3+)-binding site is contributed by Asp314. Asp314 contacts Zn(2+). Residues Asn316 and Gly318 each coordinate N-formimidoyl-L-glutamate. 4-imidazolone-5-propanoate is bound at residue Thr319.

It belongs to the metallo-dependent hydrolases superfamily. HutI family. It depends on Zn(2+) as a cofactor. Requires Fe(3+) as cofactor.

The protein resides in the cytoplasm. It carries out the reaction 4-imidazolone-5-propanoate + H2O = N-formimidoyl-L-glutamate. It participates in amino-acid degradation; L-histidine degradation into L-glutamate; N-formimidoyl-L-glutamate from L-histidine: step 3/3. Its function is as follows. Catalyzes the hydrolytic cleavage of the carbon-nitrogen bond in imidazolone-5-propanoate to yield N-formimidoyl-L-glutamate. It is the third step in the universal histidine degradation pathway. This chain is Imidazolonepropionase, found in Methylobacterium sp. (strain 4-46).